The sequence spans 220 residues: Claudin-22 (220 aa).

Over methionine 1–glutamine 10 the chain is Cytoplasmic. The chain crosses the membrane as a helical span at residues leucine 11–leucine 30. Topologically, residues proline 31 to arginine 81 are extracellular. The helical transmembrane segment at isoleucine 82–leucine 102 threads the bilayer. Residues aspartate 103–arginine 117 are Cytoplasmic-facing. A helical transmembrane segment spans residues leucine 118 to serine 138. The Extracellular portion of the chain corresponds to tryptophan 139–glutamate 164. The helical transmembrane segment at alanine 165 to cysteine 185 threads the bilayer. Topologically, residues alanine 186–histidine 220 are cytoplasmic.

This sequence belongs to the claudin family.

It is found in the cell junction. It localises to the tight junction. The protein localises to the cell membrane. Its function is as follows. Plays a major role in tight junction-specific obliteration of the intercellular space, through calcium-independent cell-adhesion activity. This chain is Claudin-22 (CLDN22), found in Homo sapiens (Human).